The sequence spans 174 residues: Crossover junction endodeoxyribonuclease RuvC (174 aa).

Active-site residues include Asp-8, Glu-68, and Asp-140. Positions 8, 68, and 140 each coordinate Mg(2+).

It belongs to the RuvC family. As to quaternary structure, homodimer which binds Holliday junction (HJ) DNA. The HJ becomes 2-fold symmetrical on binding to RuvC with unstacked arms; it has a different conformation from HJ DNA in complex with RuvA. In the full resolvosome a probable DNA-RuvA(4)-RuvB(12)-RuvC(2) complex forms which resolves the HJ. Mg(2+) is required as a cofactor.

It is found in the cytoplasm. It catalyses the reaction Endonucleolytic cleavage at a junction such as a reciprocal single-stranded crossover between two homologous DNA duplexes (Holliday junction).. Functionally, the RuvA-RuvB-RuvC complex processes Holliday junction (HJ) DNA during genetic recombination and DNA repair. Endonuclease that resolves HJ intermediates. Cleaves cruciform DNA by making single-stranded nicks across the HJ at symmetrical positions within the homologous arms, yielding a 5'-phosphate and a 3'-hydroxyl group; requires a central core of homology in the junction. The consensus cleavage sequence is 5'-(A/T)TT(C/G)-3'. Cleavage occurs on the 3'-side of the TT dinucleotide at the point of strand exchange. HJ branch migration catalyzed by RuvA-RuvB allows RuvC to scan DNA until it finds its consensus sequence, where it cleaves and resolves the cruciform DNA. The sequence is that of Crossover junction endodeoxyribonuclease RuvC from Legionella pneumophila (strain Corby).